The following is a 704-amino-acid chain: Elongation factor G 1 (704 aa).

One can recognise a tr-type G domain in the interval 8–291; it reads ERYRNIGISA…AVIDYLPSPA (284 aa). Residues 17–24, 88–92, and 142–145 contribute to the GTP site; these read AHIDAGKT, DTPGH, and NKMD.

This sequence belongs to the TRAFAC class translation factor GTPase superfamily. Classic translation factor GTPase family. EF-G/EF-2 subfamily.

The protein localises to the cytoplasm. Its function is as follows. Catalyzes the GTP-dependent ribosomal translocation step during translation elongation. During this step, the ribosome changes from the pre-translocational (PRE) to the post-translocational (POST) state as the newly formed A-site-bound peptidyl-tRNA and P-site-bound deacylated tRNA move to the P and E sites, respectively. Catalyzes the coordinated movement of the two tRNA molecules, the mRNA and conformational changes in the ribosome. This is Elongation factor G 1 from Burkholderia mallei (strain ATCC 23344).